Reading from the N-terminus, the 249-residue chain is LexA repressor (249 aa).

The disordered stretch occupies residues 1-26 (MAAQATGGRATQRSQQSPAKPKGLTV). The span at 9 to 18 (RATQRSQQSP) shows a compositional bias: polar residues. The segment at residues 48–68 (MREIGDTVGLASLSSVTHQLS) is a DNA-binding region (H-T-H motif). Catalysis depends on for autocatalytic cleavage activity residues serine 173 and lysine 210.

Belongs to the peptidase S24 family. As to quaternary structure, homodimer.

It catalyses the reaction Hydrolysis of Ala-|-Gly bond in repressor LexA.. In terms of biological role, represses a number of genes involved in the response to DNA damage (SOS response), including recA and lexA. In the presence of single-stranded DNA, RecA interacts with LexA causing an autocatalytic cleavage which disrupts the DNA-binding part of LexA, leading to derepression of the SOS regulon and eventually DNA repair. This is LexA repressor from Arthrobacter sp. (strain FB24).